Here is a 1523-residue protein sequence, read N- to C-terminus: Rho GTPase-activating protein gacHH (1523 aa).

Kelch repeat units follow at residues 30–76 (DIVI…YGHS), 83–133 (KMFV…LIYD), and 135–184 (YILI…DISP). Composition is skewed to polar residues over residues 161 to 173 (NSWT…SSTG) and 184 to 194 (PRSSTTTPTHQ). The segment at 161–256 (NSWTKPSSNS…GGSPMTTPPT (96 aa)) is disordered. The span at 195-211 (SVNGSNSNSSSSSRVRS) shows a compositional bias: low complexity. Residues 212–221 (ATISSHNNSP) show a composition bias toward polar residues. Residues 227–244 (NNNNNNNNNSNNSNNSNN) are compositionally biased toward low complexity. 3 Kelch repeats span residues 335 to 384 (KAFI…AIGS), 386 to 441 (LFIF…PISS), and 443 to 496 (ILII…PITS). 3 disordered regions span residues 510 to 569 (LPHL…DNIN), 609 to 631 (QSID…VSND), and 647 to 671 (NKNN…NSGS). Residues 615–626 (GGSGGGSGGGNG) are compositionally biased toward gly residues. The stretch at 690–729 (CIKKYNSLKDSYLELKQKYQEEREKRLELEKELERYRLSS) forms a coiled coil. The disordered stretch occupies residues 748-786 (NINSNNSTTTTTTTTTTTTTPIPLSTSNNNNNNNNNSTL). A coiled-coil region spans residues 812–840 (YEKRVKWKENTEKEANQQLEVIKSKIDLF). 5 disordered regions span residues 861–881 (SENI…QNPQ), 905–927 (LTPR…PIPL), 963–991 (TPQK…SKST), 1006–1096 (SGHF…RLGK), and 1143–1194 (NGAN…SERI). Low complexity predominate over residues 870 to 881 (QQQQQQQQQNPQ). The span at 905-915 (LTPRKSRENSV) shows a compositional bias: basic and acidic residues. Low complexity-rich tracts occupy residues 971 to 981 (PQQQQQQQPPQ), 1012 to 1030 (SSSN…FSNN), 1043 to 1079 (QHQQ…LQTQ), and 1143 to 1153 (NGANNLGGLVL). Residues 1151 to 1228 (LVLTSDKEKE…KKHKKIKGLF (78 aa)) adopt a coiled-coil conformation. Residues 1155-1194 (SDKEKEKLEKEREKSERIEREKQEKEREKLEKEREKSERI) are compositionally biased toward basic and acidic residues. Residues 1233–1411 (SNKESLPFRR…TFIEDFHYIF (179 aa)) enclose the Rho-GAP domain. The interval 1425–1482 (DDDYDSSSFGSNNTPSSHSPHSSSPTLNPAVTTTTTTTTTTNTTTTTNTTTTPTSATI) is disordered. Residues 1430 to 1476 (SSSFGSNNTPSSHSPHSSSPTLNPAVTTTTTTTTTTNTTTTTNTTTT) are compositionally biased toward low complexity.

It localises to the cytoplasm. Its function is as follows. Rho GTPase-activating protein involved in the signal transduction pathway. The polypeptide is Rho GTPase-activating protein gacHH (gacHH) (Dictyostelium discoideum (Social amoeba)).